The primary structure comprises 491 residues: Glutamyl-tRNA(Gln) amidotransferase subunit A (491 aa).

Catalysis depends on charge relay system residues Lys79 and Ser154. Ser178 serves as the catalytic Acyl-ester intermediate.

This sequence belongs to the amidase family. GatA subfamily. As to quaternary structure, heterotrimer of A, B and C subunits.

The enzyme catalyses L-glutamyl-tRNA(Gln) + L-glutamine + ATP + H2O = L-glutaminyl-tRNA(Gln) + L-glutamate + ADP + phosphate + H(+). Allows the formation of correctly charged Gln-tRNA(Gln) through the transamidation of misacylated Glu-tRNA(Gln) in organisms which lack glutaminyl-tRNA synthetase. The reaction takes place in the presence of glutamine and ATP through an activated gamma-phospho-Glu-tRNA(Gln). In Synechococcus sp. (strain CC9902), this protein is Glutamyl-tRNA(Gln) amidotransferase subunit A.